The following is a 160-amino-acid chain: Nucleotide-binding protein Tgr7_1196 (160 aa).

The protein belongs to the YajQ family.

In terms of biological role, nucleotide-binding protein. This Thioalkalivibrio sulfidiphilus (strain HL-EbGR7) protein is Nucleotide-binding protein Tgr7_1196.